The sequence spans 202 residues: Large ribosomal subunit protein uL13 (202 aa).

Belongs to the universal ribosomal protein uL13 family.

The protein is Large ribosomal subunit protein uL13 of Caenorhabditis elegans.